The chain runs to 70 residues: Conotoxin Mr3.8 (70 aa).

The first 24 residues, Met1–Ala24, serve as a signal peptide directing secretion. Residues Asp25–Arg54 constitute a propeptide that is removed on maturation. Disulfide bonds link Cys55-Cys67, Cys56-Cys68, and Cys61-Cys65.

Belongs to the conotoxin M superfamily. As to expression, expressed by the venom duct.

The protein localises to the secreted. Functionally, in vitro, inhibits proliferation of the mice ovarian cancer cells ID8. The sequence is that of Conotoxin Mr3.8 from Conus marmoreus (Marble cone).